Consider the following 143-residue polypeptide: Anti-sigma F factor (143 aa).

Belongs to the anti-sigma-factor family.

It carries out the reaction L-seryl-[protein] + ATP = O-phospho-L-seryl-[protein] + ADP + H(+). The catalysed reaction is L-threonyl-[protein] + ATP = O-phospho-L-threonyl-[protein] + ADP + H(+). In terms of biological role, binds to sigma F and blocks its ability to form an RNA polymerase holoenzyme (E-sigma F). Phosphorylates SpoIIAA on a serine residue. This phosphorylation may enable SpoIIAA to act as an anti-anti-sigma factor that counteracts SpoIIAB and thus releases sigma F from inhibition. This Clostridium botulinum (strain Alaska E43 / Type E3) protein is Anti-sigma F factor.